The primary structure comprises 304 residues: UDP-N-acetylenolpyruvoylglucosamine reductase (304 aa).

The 166-residue stretch at 33-198 (RVGGPADILV…IEATIELESG (166 aa)) folds into the FAD-binding PCMH-type domain. Arginine 177 is an active-site residue. The Proton donor role is filled by serine 227. The active site involves glutamate 297.

It belongs to the MurB family. Requires FAD as cofactor.

It is found in the cytoplasm. It carries out the reaction UDP-N-acetyl-alpha-D-muramate + NADP(+) = UDP-N-acetyl-3-O-(1-carboxyvinyl)-alpha-D-glucosamine + NADPH + H(+). It participates in cell wall biogenesis; peptidoglycan biosynthesis. Its function is as follows. Cell wall formation. This chain is UDP-N-acetylenolpyruvoylglucosamine reductase, found in Clostridium perfringens (strain SM101 / Type A).